A 414-amino-acid polypeptide reads, in one-letter code: Esterase FrsA (414 aa).

Belongs to the FrsA family.

The catalysed reaction is a carboxylic ester + H2O = an alcohol + a carboxylate + H(+). Catalyzes the hydrolysis of esters. This chain is Esterase FrsA, found in Salmonella choleraesuis (strain SC-B67).